Reading from the N-terminus, the 122-residue chain is Phospholipase A2 crotoxin basic chain (122 aa).

7 disulfides stabilise this stretch: Cys-26–Cys-115, Cys-28–Cys-44, Cys-43–Cys-95, Cys-49–Cys-122, Cys-50–Cys-88, Cys-57–Cys-81, and Cys-75–Cys-86. Ca(2+)-binding residues include Tyr-27, Gly-29, and Gly-31. His-47 is an active-site residue. Position 48 (Asp-48) interacts with Ca(2+). Residue Asp-89 is part of the active site.

As to quaternary structure, heterodimer of one acidic (CA also named crotapotin) and one basic (CB) subunits; non-covalently linked. The cofactor is Ca(2+). In terms of tissue distribution, expressed by the venom gland.

It localises to the secreted. It catalyses the reaction a 1,2-diacyl-sn-glycero-3-phosphocholine + H2O = a 1-acyl-sn-glycero-3-phosphocholine + a fatty acid + H(+). Functionally, heterodimer CA-CB: Crotoxin is a potent presynaptic neurotoxin that possesses phospholipase A2 (PLA2) activity and exerts a lethal action by blocking neuromuscular transmission. It consists of a non-covalent association of a basic and weakly toxic PLA2 subunit (CB), with a small acidic, non-enzymatic and non-toxic subunit (CA also named crotapotin). The complex acts by binding to a specific 48-kDa protein (R48) receptor located on presynaptic membranes, forming a transient ternary complex CA-CB-R48, followed by dissociation of the CA-CB complex and release of the CA subunit. At equilibrium, only the CB subunits remain associated with the specific crotoxin receptor. In addition to neurotoxicity, crotoxin has been found to exert nephrotoxicity, and cardiovascular toxicity. Moreover, anti-inflammatory, immunomodulatory, anti-tumor and analgesic effects of crotoxin have also been reported. Monomer CB: The basic subunit of crotoxin is a snake venom phospholipase A2 (PLA2) that exhibits weak neurotoxicity and strong anticoagulant effects by binding to factor Xa (F10) and inhibiting the prothrombinase activity. In addition, it exerts myotoxicity, nephrotoxicity, and cardiovascular toxicity as well as anti-inflammatory, immunomodulatory, anti-tumor and analgesic effects. Also shows a strong antimicrobial activity against X.axonopodis passiforae (Gram-negative) which is completely dependent on the enzymatic activity. PLA2 catalyzes the calcium-dependent hydrolysis of the 2- acyl groups in 3-sn-phosphoglycerides. This is Phospholipase A2 crotoxin basic chain from Crotalus durissus collilineatus (Brazilian rattlesnake).